A 693-amino-acid polypeptide reads, in one-letter code: Homoaconitase, mitochondrial (693 aa).

The N-terminal 17 residues, 1-17, are a transit peptide targeting the mitochondrion; the sequence is MFRVQRLRMFSTSRALY. Positions 338, 405, and 408 each coordinate [4Fe-4S] cluster.

This sequence belongs to the aconitase/IPM isomerase family. The cofactor is [4Fe-4S] cluster.

It localises to the mitochondrion. The catalysed reaction is (2R,3S)-homoisocitrate = cis-homoaconitate + H2O. Its pathway is amino-acid biosynthesis; L-lysine biosynthesis via AAA pathway; L-alpha-aminoadipate from 2-oxoglutarate: step 3/5. Catalyzes the reversible hydration of cis-homoaconitate to (2R,3S)-homoisocitrate, a step in the alpha-aminoadipate pathway for lysine biosynthesis. This is Homoaconitase, mitochondrial (LYS4) from Kluyveromyces lactis (strain ATCC 8585 / CBS 2359 / DSM 70799 / NBRC 1267 / NRRL Y-1140 / WM37) (Yeast).